Reading from the N-terminus, the 648-residue chain is Serine/threonine-protein kinase plk-1 (648 aa).

The segment at 1-24 (MNRLPNIAKPPQKSNQRKEKAPPE) is disordered. The Protein kinase domain occupies 38–289 (YEKGRFLGKG…AKQVQRDGFF (252 aa)). Residues 44–52 (LGKGGFAHC) and Lys67 each bind ATP. Catalysis depends on Asp161, which acts as the Proton acceptor. POLO box domains lie at 412-492 (WISK…YMND) and 514-596 (TLRV…RLMS). Low complexity predominate over residues 612 to 629 (PRSMAAARSASAGSRGPN).

This sequence belongs to the protein kinase superfamily. Ser/Thr protein kinase family. CDC5/Polo subfamily. As to quaternary structure, interacts with mex-5, mex-6 and spat-1. Embryos.

It localises to the cytoplasm. It is found in the cytoskeleton. The protein localises to the microtubule organizing center. Its subcellular location is the centrosome. The protein resides in the midbody. It localises to the nucleus. It is found in the chromosome. The protein localises to the centromere. Its subcellular location is the kinetochore. The enzyme catalyses L-seryl-[protein] + ATP = O-phospho-L-seryl-[protein] + ADP + H(+). The catalysed reaction is L-threonyl-[protein] + ATP = O-phospho-L-threonyl-[protein] + ADP + H(+). Its function is as follows. Required for oocyte nuclear envelope breakdown before entry of oocyte into spermatheca. In meiotic cells, required for spindle dynamics and probably for spindle attachment to the chromosomes. Zygotic role in the development of the germline and nerve cord. In mitotic cells, plays a role in spindle organization and centrosome maturation. Involved in asymmetric nuclear localization of cdc-25.1 during embryogenesis which affects cell division timing. Together with plk-2, regulates cytoplasm polarity in early embryos. May play a minor role in chromosome pairing and synapsis during oocyte meiosis I. This chain is Serine/threonine-protein kinase plk-1 (plk-1), found in Caenorhabditis elegans.